We begin with the raw amino-acid sequence, 348 residues long: Major outer membrane protein P.IB (348 aa).

The N-terminal stretch at 1–19 (MKKSLIALTLAALPVAAMA) is a signal peptide.

The protein belongs to the Gram-negative porin family. In terms of assembly, homotrimer.

Its subcellular location is the cell outer membrane. Functionally, serves as a slightly cation selective porin. Major antigen on the gonococcal cell surface and it may have pathogenic properties in addition to its porin activity. In Neisseria gonorrhoeae, this protein is Major outer membrane protein P.IB (porB).